Here is a 147-residue protein sequence, read N- to C-terminus: Large ribosomal subunit protein uL15 (147 aa).

The segment at 1–58 (MKLHELKPAQGSTKAPKRLGRGIGSGTGKTSGKGHKGQKARAGGGVRPGFEGGQQPLA) is disordered. 2 stretches are compositionally biased toward gly residues: residues 21-31 (RGIGSGTGKTS) and 42-52 (AGGGVRPGFEG).

This sequence belongs to the universal ribosomal protein uL15 family. As to quaternary structure, part of the 50S ribosomal subunit.

Its function is as follows. Binds to the 23S rRNA. In Desulfitobacterium hafniense (strain Y51), this protein is Large ribosomal subunit protein uL15.